Here is a 245-residue protein sequence, read N- to C-terminus: Octanoyltransferase (245 aa).

Positions 54–242 (KTAHEQVWLL…AFEKIFGPTI (189 aa)) constitute a BPL/LPL catalytic domain. Residues 93–100 (RGGEFTYH), 173–175 (AIG), and 186–188 (GVS) each bind substrate. Cys-204 acts as the Acyl-thioester intermediate in catalysis.

Belongs to the LipB family.

It is found in the cytoplasm. It catalyses the reaction octanoyl-[ACP] + L-lysyl-[protein] = N(6)-octanoyl-L-lysyl-[protein] + holo-[ACP] + H(+). It participates in protein modification; protein lipoylation via endogenous pathway; protein N(6)-(lipoyl)lysine from octanoyl-[acyl-carrier-protein]: step 1/2. In terms of biological role, catalyzes the transfer of endogenously produced octanoic acid from octanoyl-acyl-carrier-protein onto the lipoyl domains of lipoate-dependent enzymes. Lipoyl-ACP can also act as a substrate although octanoyl-ACP is likely to be the physiological substrate. This Bartonella tribocorum (strain CIP 105476 / IBS 506) protein is Octanoyltransferase.